The chain runs to 94 residues: uncharacterized protein (94 aa).

Positions Met-1–Ser-23 are disordered.

This is an uncharacterized protein from Homo sapiens (Human).